The sequence spans 343 residues: Aspartate carbamoyltransferase catalytic subunit (343 aa).

The carbamoyl phosphate site is built by R54 and T55. L-aspartate is bound at residue K82. R104, H134, and Q137 together coordinate carbamoyl phosphate. L-aspartate is bound by residues R177 and R232. Residues G277 and P278 each coordinate carbamoyl phosphate. A disordered region spans residues 323–343; that stretch reads PDQSNPQRNVTNTSNWQETKR.

It belongs to the aspartate/ornithine carbamoyltransferase superfamily. ATCase family. In terms of assembly, heterododecamer (2C3:3R2) of six catalytic PyrB chains organized as two trimers (C3), and six regulatory PyrI chains organized as three dimers (R2).

The catalysed reaction is carbamoyl phosphate + L-aspartate = N-carbamoyl-L-aspartate + phosphate + H(+). It functions in the pathway pyrimidine metabolism; UMP biosynthesis via de novo pathway; (S)-dihydroorotate from bicarbonate: step 2/3. Functionally, catalyzes the condensation of carbamoyl phosphate and aspartate to form carbamoyl aspartate and inorganic phosphate, the committed step in the de novo pyrimidine nucleotide biosynthesis pathway. In Renibacterium salmoninarum (strain ATCC 33209 / DSM 20767 / JCM 11484 / NBRC 15589 / NCIMB 2235), this protein is Aspartate carbamoyltransferase catalytic subunit.